The chain runs to 158 residues: NKG2-F type II integral membrane protein (158 aa).

Over residues 1 to 12 the composition is skewed to polar residues; it reads MNKQRGTYSEVS. Residues 1–25 form a disordered region; sequence MNKQRGTYSEVSLAQDPKRQQRKLK. Topologically, residues 1–74 are cytoplasmic; it reads MNKQRGTYSE…LPPPEKLTAE (74 aa). Residues 75-95 form a helical; Signal-anchor for type II membrane protein membrane-spanning segment; that stretch reads VLGIICIVLMATVLKTIVLIP. Topologically, residues 96–158 are extracellular; it reads CIGVLEQNNF…VLRRTLICFL (63 aa).

As to quaternary structure, can form disulfide-bonded heterodimer with CD94. Natural killer cells.

Its subcellular location is the membrane. May play a role as a receptor for the recognition of MHC class I HLA-E molecules by NK cells. The chain is NKG2-F type II integral membrane protein (KLRC4) from Homo sapiens (Human).